Consider the following 527-residue polypeptide: Tetanolysin (527 aa).

The signal sequence occupies residues 1–32; it reads MNKNVLKFVSRSLLIFSMTGLISNYNSSNVLA. 4 consecutive transmembrane segments (beta stranded) span residues 215-228, 235-244, 313-322, and 330-342; these read QSQL…NFKA, IDFDSIFKGE, SSHVKAAFKA, and SSNA…LNQS. A Conserved undecapeptide motif is present at residues 484 to 494; it reads ECTGLAWEWWR. Residues 516–517 carry the Cholesterol binding motif; sequence TL.

Belongs to the cholesterol-dependent cytolysin family. As to quaternary structure, homooligomeric pore complex containing 35-50 subunits; when inserted in the host membrane. Post-translationally, purified 48 and 53 kDa proteins with 4 different pIs (6.1, 5.6, 5.3 and 6.6) in decreasing order of activity.

The protein resides in the secreted. Its subcellular location is the host cell membrane. With respect to regulation, cytolysis of host cells is inhibited by cholesterol. Functionally, a cholesterol-dependent toxin that causes cytolysis by forming pores in cholesterol-containing host membranes. After binding to target membranes, the protein undergoes a major conformation change, leading to its insertion in the host membrane and formation of an oligomeric pore complex. Cholesterol is required for binding to host membranes, membrane insertion and pore formation; cholesterol binding is mediated by a Thr-Leu pair in the C-terminus. The polypeptide is Tetanolysin (Clostridium tetani (strain Massachusetts / E88)).